Consider the following 556-residue polypeptide: Myb/SANT-like DNA-binding domain-containing protein 2 (556 aa).

Polar residues-rich tracts occupy residues 1 to 10 (MAASCGSSQL) and 36 to 45 (GNPSLSDPST). The tract at residues 1-82 (MAASCGSSQL…GGASPSVSFS (82 aa)) is disordered. Gly residues predominate over residues 56-74 (PAAGGAGLGGGGAAGGRGG). The 71-residue stretch at 99–169 (SWTPAETNAL…QCRERIKTLR (71 aa)) folds into the Myb-like domain. Positions 431-458 (PRSPLAEPRGADPSNETPGELEVPSPQA) are disordered.

The chain is Myb/SANT-like DNA-binding domain-containing protein 2 (MSANTD2) from Gallus gallus (Chicken).